Here is a 215-residue protein sequence, read N- to C-terminus: Probable phosphoglycerate mutase GpmB (215 aa).

Residues 8–15 (RHGETQWN), 21–22 (QG), Arg58, Arg60, 82–85 (ELDM), 104–105 (RR), and 151–152 (GI) contribute to the substrate site. The active-site Tele-phosphohistidine intermediate is the His9. The Proton donor/acceptor role is filled by Glu82.

The protein belongs to the phosphoglycerate mutase family. GpmB subfamily.

The enzyme catalyses (2R)-2-phosphoglycerate = (2R)-3-phosphoglycerate. The protein operates within carbohydrate degradation; glycolysis; pyruvate from D-glyceraldehyde 3-phosphate: step 3/5. The polypeptide is Probable phosphoglycerate mutase GpmB (Klebsiella pneumoniae subsp. pneumoniae (strain ATCC 700721 / MGH 78578)).